The chain runs to 214 residues: dITP/XTP pyrophosphatase (214 aa).

13–18 lines the substrate pocket; it reads SHNAGK. 2 residues coordinate Mg(2+): D45 and D74. D74 serves as the catalytic Proton acceptor. Residues S75, 163–166, K186, and 199–200 contribute to the substrate site; these read FGYD and HR.

It belongs to the HAM1 NTPase family. In terms of assembly, homodimer. Requires Mg(2+) as cofactor.

It catalyses the reaction XTP + H2O = XMP + diphosphate + H(+). It carries out the reaction dITP + H2O = dIMP + diphosphate + H(+). The catalysed reaction is ITP + H2O = IMP + diphosphate + H(+). Its function is as follows. Pyrophosphatase that catalyzes the hydrolysis of nucleoside triphosphates to their monophosphate derivatives, with a high preference for the non-canonical purine nucleotides XTP (xanthosine triphosphate), dITP (deoxyinosine triphosphate) and ITP. Seems to function as a house-cleaning enzyme that removes non-canonical purine nucleotides from the nucleotide pool, thus preventing their incorporation into DNA/RNA and avoiding chromosomal lesions. The sequence is that of dITP/XTP pyrophosphatase from Rhizobium meliloti (strain 1021) (Ensifer meliloti).